The chain runs to 105 residues: Large ribosomal subunit protein uL24 (105 aa).

Belongs to the universal ribosomal protein uL24 family. As to quaternary structure, part of the 50S ribosomal subunit.

One of two assembly initiator proteins, it binds directly to the 5'-end of the 23S rRNA, where it nucleates assembly of the 50S subunit. Functionally, one of the proteins that surrounds the polypeptide exit tunnel on the outside of the subunit. This chain is Large ribosomal subunit protein uL24, found in Xylella fastidiosa (strain M12).